The sequence spans 625 residues: tRNA uridine 5-carboxymethylaminomethyl modification enzyme MnmG (625 aa).

FAD contacts are provided by residues 16–21, Ile-128, and Ser-183; that span reads GGGHAG. 275–289 contributes to the NAD(+) binding site; the sequence is GPRYCPSIEDKVVRF. Gln-372 contributes to the FAD binding site.

The protein belongs to the MnmG family. As to quaternary structure, homodimer. Heterotetramer of two MnmE and two MnmG subunits. It depends on FAD as a cofactor.

The protein resides in the cytoplasm. Functionally, NAD-binding protein involved in the addition of a carboxymethylaminomethyl (cmnm) group at the wobble position (U34) of certain tRNAs, forming tRNA-cmnm(5)s(2)U34. The sequence is that of tRNA uridine 5-carboxymethylaminomethyl modification enzyme MnmG from Protochlamydia amoebophila (strain UWE25).